A 406-amino-acid polypeptide reads, in one-letter code: Cytochrome bc1 complex Rieske iron-sulfur subunit (406 aa).

The next 3 helical transmembrane spans lie at 56 to 76, 98 to 118, and 166 to 186; these read VGIW…VYLF, LLGL…IFYI, and MLGI…GGMV. The region spanning 291 to 388 is the Rieske domain; that stretch reads HGPRNAVMLI…ITVDEEGYLV (98 aa). C331, H333, C350, and H353 together coordinate [2Fe-2S] cluster. C336 and C352 are oxidised to a cystine.

It belongs to the Rieske iron-sulfur protein family. As to quaternary structure, the cytochrome bc1 complex is composed of a cytochrome b (QcrB), the Rieske iron-sulfur protein (QcrA) and a diheme cytochrome c (QcrC) subunit. The bc1 complex forms a supercomplex with cytochrome c oxidase (cytochrome aa3). It depends on [2Fe-2S] cluster as a cofactor.

It is found in the cell membrane. Its function is as follows. Iron-sulfur subunit of the cytochrome bc1 complex, an essential component of the respiratory electron transport chain required for ATP synthesis. The bc1 complex catalyzes the oxidation of menaquinol and the reduction of cytochrome c in the respiratory chain. The bc1 complex operates through a Q-cycle mechanism that couples electron transfer to generation of the proton gradient that drives ATP synthesis. The polypeptide is Cytochrome bc1 complex Rieske iron-sulfur subunit (qcrA) (Corynebacterium diphtheriae (strain ATCC 700971 / NCTC 13129 / Biotype gravis)).